A 1475-amino-acid polypeptide reads, in one-letter code: Mediator of RNA polymerase II transcription subunit 1 (1475 aa).

Residues 1-10 are compositionally biased toward polar residues; that stretch reads MSGSNAKSSG. Disordered regions lie at residues 1–26, 616–644, 709–992, 1135–1166, 1184–1245, 1263–1354, and 1387–1475; these read MSGSNAKSSGTGFGSHIPSIEEKNKQ, ETDPQSGSSASGTTVSGSSSSSGSAKTSD, GVTA…VASG, QPQPGAAPTSSCLTTSGGSSDSAGSINPAGAS, NKTG…SKKA, KANS…RFDH, and PKLS…LAGE. Low complexity-rich tracts occupy residues 621-641, 711-729, and 738-782; these read SGSSASGTTVSGSSSSSGSAK, TASSSATPTTITITPITGK, and KSTA…SGSS. Phosphoserine occurs at positions 830, 834, 854, and 858. 2 stretches are compositionally biased toward polar residues: residues 860-874 and 888-897; these read VYSSPKHNTASNSPK and GKPSMSTLKS. The span at 919 to 934 shows a compositional bias: low complexity; sequence TSSGPSASSGSSGATG. Positions 944–953 are enriched in pro residues; the sequence is APPPPPPIPP. Composition is skewed to low complexity over residues 954 to 966, 973 to 989, 1143 to 1159, 1185 to 1225, and 1265 to 1276; these read LASSSGSISSSQS, SSASGSSSTSSSATAGV, TSSCLTTSGGSSDSAGS, KTGS…TGST, and NSSGNLSSKLSG. Residues 1286 to 1296 are compositionally biased toward polar residues; sequence TKSNSTNSFQE. Composition is skewed to low complexity over residues 1334–1346 and 1399–1409; these read SGSVSPALSGSMS and TSGRSTPSGSS. Polar residues-rich tracts occupy residues 1415–1430 and 1442–1458; these read GTSSSILGPIASSTGL and SQSGNEGLLNLSSTAGT.

Belongs to the Mediator complex subunit 1 family. Component of the Mediator complex.

The protein localises to the nucleus. Functionally, component of the Mediator complex, a coactivator involved in the regulated transcription of nearly all RNA polymerase II-dependent genes. Mediator functions as a bridge to convey information from gene-specific regulatory proteins to the basal RNA polymerase II transcription machinery. Mediator is recruited to promoters by direct interactions with regulatory proteins and serves as a scaffold for the assembly of a functional preinitiation complex with RNA polymerase II and the general transcription factors. Required for activated transcription of the MtnA, MtnB and MtnD genes. The sequence is that of Mediator of RNA polymerase II transcription subunit 1 (MED1) from Drosophila melanogaster (Fruit fly).